Here is a 137-residue protein sequence, read N- to C-terminus: SMR2 protein (137 aa).

The signal sequence occupies residues M1–N18. Positions S14–Q113 are disordered. Low complexity predominate over residues Q75 to Q85. The segment covering P99–L110 has biased composition (basic and acidic residues).

It localises to the secreted. Functionally, unknown, male-specific function. The protein is SMR2 protein (Smr2) of Rattus norvegicus (Rat).